The sequence spans 330 residues: NADH-quinone oxidoreductase subunit H (330 aa).

8 helical membrane-spanning segments follow: residues 5–25, 78–98, 120–140, 155–175, 191–211, 243–263, 271–291, and 308–328; these read LLTLILIVIKLGLVLGTVLTL, WVFMLAPAISTITALLAFAVI, IGLLYLFALSSLAVYGVALGG, AMAQMISYELAMGLAIVPVVM, SLPNMLRHPLAFFIFLVAIMA, FFVGEYLNLIVLGSMLTVLFL, LPGICWFLIKVLGVAFFFIWV, and WKILVPLGLLNILVTAAWLIW.

The protein belongs to the complex I subunit 1 family. As to quaternary structure, NDH-1 is composed of 14 different subunits. Subunits NuoA, H, J, K, L, M, N constitute the membrane sector of the complex.

Its subcellular location is the cell inner membrane. The enzyme catalyses a quinone + NADH + 5 H(+)(in) = a quinol + NAD(+) + 4 H(+)(out). Its function is as follows. NDH-1 shuttles electrons from NADH, via FMN and iron-sulfur (Fe-S) centers, to quinones in the respiratory chain. The immediate electron acceptor for the enzyme in this species is believed to be ubiquinone. Couples the redox reaction to proton translocation (for every two electrons transferred, four hydrogen ions are translocated across the cytoplasmic membrane), and thus conserves the redox energy in a proton gradient. This subunit may bind ubiquinone. This Syntrophotalea carbinolica (strain DSM 2380 / NBRC 103641 / GraBd1) (Pelobacter carbinolicus) protein is NADH-quinone oxidoreductase subunit H.